A 418-amino-acid chain; its full sequence is Gamma-glutamyl phosphate reductase (418 aa).

This sequence belongs to the gamma-glutamyl phosphate reductase family.

Its subcellular location is the cytoplasm. The catalysed reaction is L-glutamate 5-semialdehyde + phosphate + NADP(+) = L-glutamyl 5-phosphate + NADPH + H(+). Its pathway is amino-acid biosynthesis; L-proline biosynthesis; L-glutamate 5-semialdehyde from L-glutamate: step 2/2. Functionally, catalyzes the NADPH-dependent reduction of L-glutamate 5-phosphate into L-glutamate 5-semialdehyde and phosphate. The product spontaneously undergoes cyclization to form 1-pyrroline-5-carboxylate. This chain is Gamma-glutamyl phosphate reductase, found in Moorella thermoacetica (strain ATCC 39073 / JCM 9320).